Here is a 106-residue protein sequence, read N- to C-terminus: MQLADAEKWMKEFYEKRGWTEYGPFIRVGFLMEEAGELARAVRAYEIGRDRPDEKESSRAEQKQELIEEMGDVIGNIAILADMYGVSLEDVMKAHQEKLTKRFEHA.

This is an uncharacterized protein from Bacillus subtilis (strain 168).